The primary structure comprises 186 residues: Ribosome-recycling factor (186 aa).

This sequence belongs to the RRF family.

The protein resides in the cytoplasm. In terms of biological role, responsible for the release of ribosomes from messenger RNA at the termination of protein biosynthesis. May increase the efficiency of translation by recycling ribosomes from one round of translation to another. This chain is Ribosome-recycling factor, found in Pediococcus pentosaceus (strain ATCC 25745 / CCUG 21536 / LMG 10740 / 183-1w).